The following is a 120-amino-acid chain: NAD(P)H-quinone oxidoreductase subunit 3, chloroplastic (120 aa).

Helical transmembrane passes span 9-29 (IFWT…SISG), 64-84 (MFAL…PWAM), and 88-108 (VLGV…VVGL).

Belongs to the complex I subunit 3 family. In terms of assembly, NDH is composed of at least 16 different subunits, 5 of which are encoded in the nucleus.

The protein resides in the plastid. The protein localises to the chloroplast thylakoid membrane. The enzyme catalyses a plastoquinone + NADH + (n+1) H(+)(in) = a plastoquinol + NAD(+) + n H(+)(out). It carries out the reaction a plastoquinone + NADPH + (n+1) H(+)(in) = a plastoquinol + NADP(+) + n H(+)(out). In terms of biological role, NDH shuttles electrons from NAD(P)H:plastoquinone, via FMN and iron-sulfur (Fe-S) centers, to quinones in the photosynthetic chain and possibly in a chloroplast respiratory chain. The immediate electron acceptor for the enzyme in this species is believed to be plastoquinone. Couples the redox reaction to proton translocation, and thus conserves the redox energy in a proton gradient. The sequence is that of NAD(P)H-quinone oxidoreductase subunit 3, chloroplastic from Hordeum vulgare (Barley).